The sequence spans 378 residues: Odorant receptor 45a (378 aa).

Topologically, residues 1 to 30 (MDASYFAVQRRALEIVGFDPSTPQLSLKHP) are cytoplasmic. A helical transmembrane segment spans residues 31–51 (IWAGILILSLISHNWPMVVYA). Topologically, residues 52-129 (LQDLSDLTRL…RYVARSFRNA (78 aa)) are extracellular. A helical membrane pass occupies residues 130–150 (AYGVICASAIAPMLLGLWGYV). Topologically, residues 151-173 (ETGVFTPTTPMEFNFWLDERKPH) are cytoplasmic. The chain crosses the membrane as a helical span at residues 174–194 (FYWPIYVWGVLGVAAAAWLAI). Residues 195–197 (ATD) are Extracellular-facing. Residues 198 to 218 (TLFSWLTHNVVIQFQLLELVL) form a helical membrane-spanning segment. The Cytoplasmic segment spans residues 219–249 (EEKDLNGGDSRLTGFVSRHRIALDLAKELSS). A helical transmembrane segment spans residues 250–270 (IFGEIVFVKYMLSYLQLCMLA). Topologically, residues 271–285 (FRFSRSGWSAQVPFR) are extracellular. Residues 286 to 306 (ATFLVAIIIQLSSYCYGGEYI) form a helical membrane-spanning segment. Residues 307–342 (KQQSLAIAQAVYGQINWPEMTPKKRRLWQMVIMRAQ) are Cytoplasmic-facing. A helical transmembrane segment spans residues 343-363 (RPAKIFGFMFVVDLPLLLWVI). At 364 to 378 (RTAGSFLAMLRTFER) the chain is on the extracellular side.

It belongs to the insect chemoreceptor superfamily. Heteromeric odorant receptor channel (TC 1.A.69) family. Or1a subfamily. As to quaternary structure, interacts with Orco. Complexes exist early in the endomembrane system in olfactory sensory neurons (OSNs), coupling these complexes to the conserved ciliary trafficking pathway.

The protein resides in the cell membrane. Odorant receptor which mediates acceptance or avoidance behavior, depending on its substrates. The odorant receptor repertoire encodes a large collection of odor stimuli that vary widely in identity, intensity, and duration. May form a complex with Orco to form odorant-sensing units, providing sensitive and prolonged odorant signaling and calcium permeability. Involved in the behavioral responses to hexanol, pentyl acetate, benzyl acetate, and 2-heptanone. The sequence is that of Odorant receptor 45a (Or45a) from Drosophila melanogaster (Fruit fly).